We begin with the raw amino-acid sequence, 290 residues long: 3-keto-disaccharide hydrolase (290 aa).

A signal peptide spans 1–19; sequence MKKVFYPLACCLAAGVLVS. The N-palmitoyl cysteine moiety is linked to residue cysteine 20. A lipid anchor (S-diacylglycerol cysteine) is attached at cysteine 20.

It is found in the cell membrane. It catalyses the reaction 3-dehydro-alpha,alpha-trehalose + H2O = 3-dehydro-D-glucose + D-glucose. Its function is as follows. 3-keto-disaccharide hydrolase that preferentially hydrolyzes 3-keto-trehalose (3-dehydro-alpha,alpha-trehalose). Important for disaccharide utilization in the human gut. Also shows hydrolysis activity with the glucosinolates glucoraphanin or glucobrassicin, but with much lower efficiency. This chain is 3-keto-disaccharide hydrolase, found in Bacteroides thetaiotaomicron (strain ATCC 29148 / DSM 2079 / JCM 5827 / CCUG 10774 / NCTC 10582 / VPI-5482 / E50).